Consider the following 556-residue polypeptide: 2-succinyl-5-enolpyruvyl-6-hydroxy-3-cyclohexene-1-carboxylate synthase (556 aa).

It belongs to the TPP enzyme family. MenD subfamily. In terms of assembly, homodimer. Requires Mg(2+) as cofactor. Mn(2+) serves as cofactor. Thiamine diphosphate is required as a cofactor.

The catalysed reaction is isochorismate + 2-oxoglutarate + H(+) = 5-enolpyruvoyl-6-hydroxy-2-succinyl-cyclohex-3-ene-1-carboxylate + CO2. It participates in quinol/quinone metabolism; 1,4-dihydroxy-2-naphthoate biosynthesis; 1,4-dihydroxy-2-naphthoate from chorismate: step 2/7. It functions in the pathway quinol/quinone metabolism; menaquinone biosynthesis. Catalyzes the thiamine diphosphate-dependent decarboxylation of 2-oxoglutarate and the subsequent addition of the resulting succinic semialdehyde-thiamine pyrophosphate anion to isochorismate to yield 2-succinyl-5-enolpyruvyl-6-hydroxy-3-cyclohexene-1-carboxylate (SEPHCHC). This Salmonella choleraesuis (strain SC-B67) protein is 2-succinyl-5-enolpyruvyl-6-hydroxy-3-cyclohexene-1-carboxylate synthase.